Here is a 612-residue protein sequence, read N- to C-terminus: Sulfite reductase [NADPH] hemoprotein beta-component (612 aa).

The interval methionine 1–arginine 32 is disordered. [4Fe-4S] cluster-binding residues include cysteine 469, cysteine 475, cysteine 514, and cysteine 518. Cysteine 518 lines the siroheme pocket.

Belongs to the nitrite and sulfite reductase 4Fe-4S domain family. Alpha(8)-beta(8). The alpha component is a flavoprotein, the beta component is a hemoprotein. It depends on siroheme as a cofactor. The cofactor is [4Fe-4S] cluster.

It catalyses the reaction hydrogen sulfide + 3 NADP(+) + 3 H2O = sulfite + 3 NADPH + 4 H(+). It participates in sulfur metabolism; hydrogen sulfide biosynthesis; hydrogen sulfide from sulfite (NADPH route): step 1/1. In terms of biological role, component of the sulfite reductase complex that catalyzes the 6-electron reduction of sulfite to sulfide. This is one of several activities required for the biosynthesis of L-cysteine from sulfate. This is Sulfite reductase [NADPH] hemoprotein beta-component from Methylorubrum populi (strain ATCC BAA-705 / NCIMB 13946 / BJ001) (Methylobacterium populi).